We begin with the raw amino-acid sequence, 416 residues long: Glutamyl-tRNA reductase 1 (416 aa).

Substrate-binding positions include 57–60, Ser-113, 118–120, and Gln-124; these read TCNR and DFE. Catalysis depends on Cys-58, which acts as the Nucleophile. Position 193 to 198 (193 to 198) interacts with NADP(+); it reads GTGKIG.

The protein belongs to the glutamyl-tRNA reductase family. As to quaternary structure, homodimer.

It catalyses the reaction (S)-4-amino-5-oxopentanoate + tRNA(Glu) + NADP(+) = L-glutamyl-tRNA(Glu) + NADPH + H(+). Its pathway is porphyrin-containing compound metabolism; protoporphyrin-IX biosynthesis; 5-aminolevulinate from L-glutamyl-tRNA(Glu): step 1/2. Its function is as follows. Catalyzes the NADPH-dependent reduction of glutamyl-tRNA(Glu) to glutamate 1-semialdehyde (GSA). This is Glutamyl-tRNA reductase 1 from Flavobacterium johnsoniae (strain ATCC 17061 / DSM 2064 / JCM 8514 / BCRC 14874 / CCUG 350202 / NBRC 14942 / NCIMB 11054 / UW101) (Cytophaga johnsonae).